A 360-amino-acid chain; its full sequence is Phosphoserine aminotransferase (360 aa).

An L-glutamate-binding site is contributed by Arg42. Pyridoxal 5'-phosphate contacts are provided by Trp102, Thr152, Asp171, and Gln194. Lys195 is modified (N6-(pyridoxal phosphate)lysine). 237–238 contributes to the pyridoxal 5'-phosphate binding site; it reads NT.

The protein belongs to the class-V pyridoxal-phosphate-dependent aminotransferase family. SerC subfamily. As to quaternary structure, homodimer. Pyridoxal 5'-phosphate serves as cofactor.

The protein resides in the cytoplasm. It carries out the reaction O-phospho-L-serine + 2-oxoglutarate = 3-phosphooxypyruvate + L-glutamate. It catalyses the reaction 4-(phosphooxy)-L-threonine + 2-oxoglutarate = (R)-3-hydroxy-2-oxo-4-phosphooxybutanoate + L-glutamate. The protein operates within amino-acid biosynthesis; L-serine biosynthesis; L-serine from 3-phospho-D-glycerate: step 2/3. It functions in the pathway cofactor biosynthesis; pyridoxine 5'-phosphate biosynthesis; pyridoxine 5'-phosphate from D-erythrose 4-phosphate: step 3/5. Its function is as follows. Catalyzes the reversible conversion of 3-phosphohydroxypyruvate to phosphoserine and of 3-hydroxy-2-oxo-4-phosphonooxybutanoate to phosphohydroxythreonine. This is Phosphoserine aminotransferase from Coxiella burnetii (strain CbuG_Q212) (Coxiella burnetii (strain Q212)).